Consider the following 202-residue polypeptide: Na(+)-translocating NADH-quinone reductase subunit E (202 aa).

6 helical membrane-spanning segments follow: residues 11-31 (AVFV…FIAI), 35-55 (VETA…TMPV), 79-99 (LSFL…QILE), 114-134 (GVFL…LFMV), 144-164 (TVYG…LAGI), and 180-200 (LGIT…FSGV).

Belongs to the NqrDE/RnfAE family. Composed of six subunits; NqrA, NqrB, NqrC, NqrD, NqrE and NqrF.

Its subcellular location is the cell inner membrane. It catalyses the reaction a ubiquinone + n Na(+)(in) + NADH + H(+) = a ubiquinol + n Na(+)(out) + NAD(+). Its function is as follows. NQR complex catalyzes the reduction of ubiquinone-1 to ubiquinol by two successive reactions, coupled with the transport of Na(+) ions from the cytoplasm to the periplasm. NqrA to NqrE are probably involved in the second step, the conversion of ubisemiquinone to ubiquinol. The protein is Na(+)-translocating NADH-quinone reductase subunit E of Ectopseudomonas mendocina (strain ymp) (Pseudomonas mendocina).